The chain runs to 505 residues: E3 SUMO-protein ligase PIAS4-A (505 aa).

One can recognise an SAP domain in the interval 12-46; that stretch reads VKSFRVSDLQTLLASMGRSKSGLKQDLVGRALRLV. The LXXLL motif signature appears at 20–24; the sequence is LQTLL. A Glycyl lysine isopeptide (Lys-Gly) (interchain with G-Cter in SUMO); alternate cross-link involves residue K35. Residue K35 forms a Glycyl lysine isopeptide (Lys-Gly) (interchain with G-Cter in SUMO2); alternate linkage. Glycyl lysine isopeptide (Lys-Gly) (interchain with G-Cter in SUMO2) cross-links involve residues K56 and K68. The region spanning 104–264 is the PINIT domain; the sequence is GIPKPAPPPA…SVAVYLVRVF (161 aa). Residues 296–381 form an SP-RING-type zinc finger; sequence PESEIATTGL…LKETPEDVEE (86 aa). Zn(2+) contacts are provided by C327, H329, C350, and C353. A required for nuclear localization region spans residues 374-505; that stretch reads ETPEDVEEIE…DYDKDLVTAY (132 aa). Positions 395-407 are enriched in basic and acidic residues; sequence DDKEKERERENSR. Residues 395–505 form a disordered region; the sequence is DDKEKERERE…DYDKDLVTAY (111 aa). Positions 437–457 are enriched in gly residues; it reads SGSGGASAGTGSTSGGSGGGT. Positions 462–485 are enriched in acidic residues; sequence TLDDSSEEEGGGGAEDSEETDDSQ. Basic and acidic residues predominate over residues 493–505; the sequence is GRYDYDKDLVTAY.

It belongs to the PIAS family. Post-translationally, sumoylated. Lys-35 is the main site of sumoylation. Highly expressed in spleen, liver, and brain. Expressed at lower levels in heart, intestine, kidney, gill, skin, and muscle.

The protein localises to the nucleus. The catalysed reaction is S-ubiquitinyl-[E2 ubiquitin-conjugating enzyme]-L-cysteine + [acceptor protein]-L-lysine = [E2 ubiquitin-conjugating enzyme]-L-cysteine + N(6)-ubiquitinyl-[acceptor protein]-L-lysine.. The protein operates within protein modification; protein sumoylation. In terms of biological role, functions as an E3-type small ubiquitin-like modifier (SUMO) ligase. May play a role as a transcriptional coregulator in various cellular pathways. Catalyzes conjugation of SUMO2 to KAT5 in response to DNA damage, facilitating repair of DNA double-strand breaks (DSBs) via homologous recombination (HR). Mediates sumoylation of PARP1 in response to PARP1 trapping to chromatin. Negatively regulates induction of interferon phi 1 (ifnphi1) mediated by mavs and ticam1/trif. Also inhibits ifnphi1-mediated activation of the interferon-stimulated genes (ISGs) pkz and cd40, and to a lesser extent rsad2 and isg15. May inhibit ticam1/trif-mediated activation of NF-kappa-B. The chain is E3 SUMO-protein ligase PIAS4-A from Danio rerio (Zebrafish).